Here is a 597-residue protein sequence, read N- to C-terminus: Cytosolic Fe-S cluster assembly factor nar1 (597 aa).

The [4Fe-4S] cluster site is built by Cys-20, Cys-62, Cys-65, Cys-68, Cys-216, and Cys-271. A disordered region spans residues 428 to 449; it reads RASRLPGGNRRLPVGRGAASGS. [4Fe-4S] cluster is bound by residues Cys-462 and Cys-466. A disordered region spans residues 479–505; it reads REASSSVQSSTSAEVPDSSSKPTPHEQ.

Belongs to the NARF family.

Its function is as follows. Component of the cytosolic Fe/S protein assembly machinery. Required for maturation of extramitochondrial Fe/S proteins. May play a role in the transfer of pre-assembled Fe/S clusters to target apoproteins. The chain is Cytosolic Fe-S cluster assembly factor nar1 (nar1) from Aspergillus niger (strain ATCC MYA-4892 / CBS 513.88 / FGSC A1513).